We begin with the raw amino-acid sequence, 403 residues long: Probable eukaryotic initiation factor 4A (403 aa).

A disordered region spans residues 1 to 29 (MSQQDRVAPQDQDSFLDDQPGVRPIPSFD). Residues 26 to 54 (PSFDDMPLHQNLLRGIYSYGFEKPSSIQQ) carry the Q motif motif. In terms of domain architecture, Helicase ATP-binding spans 57-230 (IAPFTRGGDI…KKFMRDPVRI (174 aa)). An ATP-binding site is contributed by 70-77 (AQSGTGKT). The DEAD box motif lies at 178–181 (DEAD). A Helicase C-terminal domain is found at 241–401 (GIKQFFIAVE…ELPVDFAAYL (161 aa)).

This sequence belongs to the DEAD box helicase family. eIF4A subfamily. In terms of assembly, eIF4F is a multi-subunit complex, the composition of which varies with external and internal environmental conditions. It is composed of at least EIF4A, EIF4E and EIF4G.

The enzyme catalyses ATP + H2O = ADP + phosphate + H(+). Its function is as follows. ATP-dependent RNA helicase which is a subunit of the eIF4F complex involved in cap recognition and is required for mRNA binding to ribosome. In the current model of translation initiation, eIF4A unwinds RNA secondary structures in the 5'-UTR of mRNAs which is necessary to allow efficient binding of the small ribosomal subunit, and subsequent scanning for the initiator codon. The polypeptide is Probable eukaryotic initiation factor 4A (Leishmania braziliensis).